Reading from the N-terminus, the 332-residue chain is Alpha/beta hydrolase domain-containing protein aho-3 (332 aa).

Residues 1–15 are compositionally biased toward low complexity; the sequence is MSSGAPSGSSMSSTP. A disordered region spans residues 1-24; sequence MSSGAPSGSSMSSTPGSPPPRAGG. Residues Ser-191, Asp-256, and His-285 each act as charge relay system in the active site.

The protein belongs to the AB hydrolase superfamily. ABHD17 family. Palmitoylated on cysteine residues located in a cysteine cluster at the N-terminus which promotes membrane localization and localization to sensory neuron endings. Expressed in a subset of neurons including AIY, HSN, ADF, AFD, AWC, AWB and NSM, hypodermis, pharyngeal muscle and intestine.

It is found in the cell membrane. The protein resides in the cytoplasmic vesicle membrane. The catalysed reaction is S-hexadecanoyl-L-cysteinyl-[protein] + H2O = L-cysteinyl-[protein] + hexadecanoate + H(+). Its function is as follows. Hydrolyzes fatty acids from S-acylated cysteine residues in proteins. Acts in sensory neurons including AWC to regulate starvation-induced thermotaxis plasticity and salt learning behavior. The polypeptide is Alpha/beta hydrolase domain-containing protein aho-3 (Caenorhabditis elegans).